The sequence spans 344 residues: Ketol-acid reductoisomerase (NADP(+)) (344 aa).

The region spanning 2–181 is the KARI N-terminal Rossmann domain; that stretch reads AKVLYEKDIQ…GAARAGVLET (180 aa). NADP(+) contacts are provided by residues 25 to 28, Arg-48, Ser-52, and 82 to 85; these read YGSQ and DEMQ. His-107 is an active-site residue. NADP(+) is bound at residue Gly-133. Residues 182–327 form the KARI C-terminal knotted domain; sequence SFQEETETDL…RELRELMPFV (146 aa). Mg(2+)-binding residues include Asp-190, Glu-194, Glu-226, and Glu-230. Residue Ser-251 coordinates substrate.

Belongs to the ketol-acid reductoisomerase family. Mg(2+) serves as cofactor.

It catalyses the reaction (2R)-2,3-dihydroxy-3-methylbutanoate + NADP(+) = (2S)-2-acetolactate + NADPH + H(+). The enzyme catalyses (2R,3R)-2,3-dihydroxy-3-methylpentanoate + NADP(+) = (S)-2-ethyl-2-hydroxy-3-oxobutanoate + NADPH + H(+). The protein operates within amino-acid biosynthesis; L-isoleucine biosynthesis; L-isoleucine from 2-oxobutanoate: step 2/4. Its pathway is amino-acid biosynthesis; L-valine biosynthesis; L-valine from pyruvate: step 2/4. Its function is as follows. Involved in the biosynthesis of branched-chain amino acids (BCAA). Catalyzes an alkyl-migration followed by a ketol-acid reduction of (S)-2-acetolactate (S2AL) to yield (R)-2,3-dihydroxy-isovalerate. In the isomerase reaction, S2AL is rearranged via a Mg-dependent methyl migration to produce 3-hydroxy-3-methyl-2-ketobutyrate (HMKB). In the reductase reaction, this 2-ketoacid undergoes a metal-dependent reduction by NADPH to yield (R)-2,3-dihydroxy-isovalerate. In Oceanobacillus iheyensis (strain DSM 14371 / CIP 107618 / JCM 11309 / KCTC 3954 / HTE831), this protein is Ketol-acid reductoisomerase (NADP(+)).